Here is a 664-residue protein sequence, read N- to C-terminus: Protein-arginine deiminase type-3 (664 aa).

It belongs to the protein arginine deiminase family. Requires Ca(2+) as cofactor. In terms of tissue distribution, hair follicles, and epidermis at very low levels.

It localises to the cytoplasm. It carries out the reaction L-arginyl-[protein] + H2O = L-citrullyl-[protein] + NH4(+). Its function is as follows. Catalyzes the deimination of arginine residues of proteins. The sequence is that of Protein-arginine deiminase type-3 (PADI3) from Homo sapiens (Human).